Consider the following 221-residue polypeptide: 7-cyano-7-deazaguanine synthase (221 aa).

ATP is bound at residue 10–20 (FSGGQDSTTCL). Zn(2+) is bound by residues Cys-186, Cys-195, Cys-198, and Cys-201.

Belongs to the QueC family. In terms of assembly, homodimer. Requires Zn(2+) as cofactor.

It catalyses the reaction 7-carboxy-7-deazaguanine + NH4(+) + ATP = 7-cyano-7-deazaguanine + ADP + phosphate + H2O + H(+). Its pathway is purine metabolism; 7-cyano-7-deazaguanine biosynthesis. In terms of biological role, catalyzes the ATP-dependent conversion of 7-carboxy-7-deazaguanine (CDG) to 7-cyano-7-deazaguanine (preQ(0)). This Geobacillus sp. (strain WCH70) protein is 7-cyano-7-deazaguanine synthase.